Reading from the N-terminus, the 906-residue chain is MNNKKTATNRKGMIPNRLNKFSIRKYSVGTASILVGTTLIFGLSGHEAKAAEHTNGELNQSKNEATAPSENKTTEKVDSRQQNNVEQSTTSNQPKVNESDNTSVKETTEEPQNTTSTQPTKKNNDATANKDNLAAQNISTQANDVSATPKTTTIKPRTLNRMAVNTVAAPQQGTNVNDKVHFSNIDIAIDKGHVNSTTGKTEFWATSSDVLKLKANYTIDDSVKEGDTFTFKYGQYFRPGSVRLPSQTQNLYNAQGNIIAKGIYDSTTNTTTYTFTNYVDQYTNVSGSFEQVAFAKRENATTDKTAYKMEVTLGNDAYSEEIIVDYGNKKAQPLISSTNYINNEDLSRNMTVYVNQPKNTYTKETFVSTLTGYKFNPDAKNFKIYEVTDQNQFVDSFTPDTSKLIDVTDKFKITYSNDNKTATVDLMNGQTNSNKQYIIQQVAYPDNTSTDNGKIDYTLDTDKTKYSWSNSYSSVNGSSTANGDQKKYNLGDYVWEDTNKDGKQDANEKGIKGVYVILKDSNGKELDRTTTDENGKYQFTGLGNGTYSVEFSTLAGYTPTTVNAGTDDAVDSDGLTTTGVIKDADNMTLDSGFYKTPKYSLGDYVWYDSNKDGKQDSTEKGIKGVKVTLQNEKGEVIGTTETDENGKYRFDNLDSGKYKVIFEKPAGLKQTGTNTTEDDKDADGGEVDVTITDHDDFTLDNGYFEEETSDSDSDSDSDSDSDSDSDSDSDSDSESDSDSDSDSDSDSDSDSDSDSDSDSDSESDSDSDSDSDSDSDSDSDSDSDSDSDSDSDSDSDSDSDSDSDSDSDSDSDSDSDSDSDSDSDSDSDSDSDSDSDSDSDSDSDSDAGKHTPVKPMSATKDHHNKAKALPETGSENNGSNNATLFGGLFAALGSLLLFGRRKKQNK.

The first 50 residues, 1 to 50 (MNNKKTATNRKGMIPNRLNKFSIRKYSVGTASILVGTTLIFGLSGHEAKA), serve as a signal peptide directing secretion. Positions 51–127 (AEHTNGELNQ…QPTKKNNDAT (77 aa)) are disordered. The ligand binding A region stretch occupies residues 51-486 (AEHTNGELNQ…GSSTANGDQK (436 aa)). Polar residues-rich tracts occupy residues 56 to 71 (GELN…PSEN) and 80 to 119 (RQQN…STQP). 2 consecutive CNA-B domains span residues 487–597 (KYNL…YKTP) and 598–708 (KYSL…EEET). A disordered region spans residues 669 to 881 (KQTGTNTTED…TGSENNGSNN (213 aa)). Acidic residues-rich tracts occupy residues 676 to 686 (TEDDKDADGGE) and 703 to 845 (YFEE…DSDS). Residues 869–873 (LPETG) carry the LPXTG sorting signal motif. Thr872 carries the pentaglycyl murein peptidoglycan amidated threonine modification. Residues 873–906 (GSENNGSNNATLFGGLFAALGSLLLFGRRKKQNK) constitute a propeptide, removed by sortase.

Belongs to the serine-aspartate repeat-containing protein (SDr) family. In terms of assembly, homodimerizes; via N2-Domain. Interacts with host NRXN1; this interaction mediates bacterial attachment to host cells.

The protein resides in the secreted. The protein localises to the cell wall. Cell surface-associated calcium-binding protein which plays an important role in adhesion and pathogenesis. Mediates interactions with components of the extracellular matrix such as host NRXN1 to promote bacterial adhesion. The sequence is that of Serine-aspartate repeat-containing protein C (sdrC) from Staphylococcus aureus (strain MRSA252).